The primary structure comprises 190 residues: MTQTSNIILIGPMGAGKSTIGRQLAAALHLPFRDSDKEIEKRTGVDIPTIFEFEGEEGFRNRESAMLEELCTEQGIVLATGGGAVMRPQNRALLRDCGLVVYLKTSVKTQLRRTARDRNRPLLQTENPRARLEELMRIRDPLYREIAELTVDTDRDSIRKVVQEISRYYRMNNKDSIPQDDSNTEPQGDG.

Residue 14 to 19 (GAGKST) coordinates ATP. Position 18 (Ser18) interacts with Mg(2+). The substrate site is built by Asp36, Arg60, and Gly82. Arg120 is a binding site for ATP. Arg139 lines the substrate pocket.

This sequence belongs to the shikimate kinase family. Monomer. Requires Mg(2+) as cofactor.

The protein resides in the cytoplasm. The catalysed reaction is shikimate + ATP = 3-phosphoshikimate + ADP + H(+). It participates in metabolic intermediate biosynthesis; chorismate biosynthesis; chorismate from D-erythrose 4-phosphate and phosphoenolpyruvate: step 5/7. Functionally, catalyzes the specific phosphorylation of the 3-hydroxyl group of shikimic acid using ATP as a cosubstrate. The chain is Shikimate kinase from Thioalkalivibrio sulfidiphilus (strain HL-EbGR7).